The sequence spans 454 residues: Venom prothrombin activator porpharin-D (454 aa).

Residues 1–20 (MAPQLLLCLILTFLWSLPEA) form the signal peptide. Residues 21–40 (ESNVFLKSKEANRFLQRTKR) constitute a propeptide that is removed on maturation. The 46-residue stretch at 41-86 (SNSLFEEFRPGNIERECIEEKCSKEEAREIFKDNEKTEAFWNVYVD) folds into the Gla domain. A 4-carboxyglutamate mark is found at Glu-46, Glu-47, Glu-54, Glu-56, Glu-59, Glu-60, Glu-65, Glu-66, Glu-69, and Glu-75. A disulfide bridge connects residues Cys-57 and Cys-62. An EGF-like 1; calcium-binding domain is found at 86-122 (DGDQCSSNPCHYGGTCKDGIGSYTCTCLPNYEGKNCE). 11 disulfide bridges follow: Cys-90-Cys-101, Cys-95-Cys-110, Cys-112-Cys-121, Cys-129-Cys-140, Cys-136-Cys-149, Cys-151-Cys-164, Cys-172-Cys-316, Cys-216-Cys-221, Cys-236-Cys-252, Cys-364-Cys-378, and Cys-389-Cys-417. Ser-92 carries an O-linked (Hex...) serine glycan. Residues 129–164 (CRFFNGNCWHFCKPVQNDTQCSCAESYRLGDDGHSC) form the EGF-like 2 domain. Positions 182–209 (REASLPDFVQSQNATLLKKSDNPSPDIR) are cleaved as a propeptide — activation peptide. The Peptidase S1 domain occupies 210–441 (IINGMDCKLG…FIPWIKAVMR (232 aa)). Active-site charge relay system residues include His-251 and Asp-296. Residue Ser-393 is the Charge relay system of the active site.

The protein belongs to the peptidase S1 family. Snake venom subfamily. As to quaternary structure, heterodimer of a light chain and a heavy chain; disulfide-linked. In terms of processing, the vitamin K-dependent, enzymatic carboxylation of some glutamate residues allows the modified protein to bind calcium. As to expression, expressed by the venom gland.

The protein resides in the secreted. The enzyme catalyses Selective cleavage of Arg-|-Thr and then Arg-|-Ile bonds in prothrombin to form thrombin.. Snake prothrombin activator that attacks the hemostatic system of prey. This protein is functionally similar to blood coagulation factor Xa. This Pseudechis porphyriacus (Red-bellied black snake) protein is Venom prothrombin activator porpharin-D.